A 172-amino-acid chain; its full sequence is 3-hydroxydecanoyl-[acyl-carrier-protein] dehydratase (172 aa).

The active site involves H71.

This sequence belongs to the thioester dehydratase family. FabA subfamily. Homodimer.

The protein resides in the cytoplasm. It catalyses the reaction a (3R)-hydroxyacyl-[ACP] = a (2E)-enoyl-[ACP] + H2O. It carries out the reaction (3R)-hydroxydecanoyl-[ACP] = (2E)-decenoyl-[ACP] + H2O. The catalysed reaction is (2E)-decenoyl-[ACP] = (3Z)-decenoyl-[ACP]. It functions in the pathway lipid metabolism; fatty acid biosynthesis. Necessary for the introduction of cis unsaturation into fatty acids. Catalyzes the dehydration of (3R)-3-hydroxydecanoyl-ACP to E-(2)-decenoyl-ACP and then its isomerization to Z-(3)-decenoyl-ACP. Can catalyze the dehydratase reaction for beta-hydroxyacyl-ACPs with saturated chain lengths up to 16:0, being most active on intermediate chain length. This Aliivibrio salmonicida (strain LFI1238) (Vibrio salmonicida (strain LFI1238)) protein is 3-hydroxydecanoyl-[acyl-carrier-protein] dehydratase.